The primary structure comprises 313 residues: Ankyrin repeat family A protein 2 (313 aa).

5 ANK repeats span residues Ala148–Glu180, Glu181–Lys213, Gly214–Trp246, Asn247–Asp279, and Ser280–Glu313.

As to quaternary structure, interacts (via ANK repeats) with CCDC8 (via PxLPxI/L motif); mediates the interaction with the 3M complex which is composed of CCDC8, CUL7 and OBSL1. Interacts (via ANK repeats) with HDAC4 (via PxLPxI/L motif). Interacts (via ANK repeats) with HDAC5 (via PxLPxI/L motif). Interacts (via ANK repeats) with LRP2/megalin (via PxLPxI/L motif). Interacts (via ANK repeats) with RFX7 (via PxLPxI/L motif). Interacts with AHRR. Interacts with NEK6.

The protein resides in the cytoplasm. It is found in the cytoskeleton. The protein localises to the membrane. Functionally, may regulate the interaction between the 3M complex and the histone deacetylases HDAC4 and HDAC5. May also regulate LRP2/megalin. In Homo sapiens (Human), this protein is Ankyrin repeat family A protein 2 (ANKRA2).